The primary structure comprises 278 residues: Biotin synthase (278 aa).

A Radical SAM core domain is found at 1–227 (MQIMLCAISN…NAHIMVAGGR (227 aa)). [4Fe-4S] cluster is bound by residues Cys-16, Cys-20, and Cys-23. Residues Cys-60, Cys-95, and Cys-153 each contribute to the [2Fe-2S] cluster site.

This sequence belongs to the radical SAM superfamily. Biotin synthase family. As to quaternary structure, homodimer. The cofactor is [4Fe-4S] cluster. [2Fe-2S] cluster is required as a cofactor.

The enzyme catalyses (4R,5S)-dethiobiotin + (sulfur carrier)-SH + 2 reduced [2Fe-2S]-[ferredoxin] + 2 S-adenosyl-L-methionine = (sulfur carrier)-H + biotin + 2 5'-deoxyadenosine + 2 L-methionine + 2 oxidized [2Fe-2S]-[ferredoxin]. The protein operates within cofactor biosynthesis; biotin biosynthesis; biotin from 7,8-diaminononanoate: step 2/2. Catalyzes the conversion of dethiobiotin (DTB) to biotin by the insertion of a sulfur atom into dethiobiotin via a radical-based mechanism. The chain is Biotin synthase from Campylobacter lari (strain RM2100 / D67 / ATCC BAA-1060).